The sequence spans 423 residues: AP-1 complex subunit mu-1 (423 aa).

S2 carries the post-translational modification N-acetylserine. T152, T154, and T223 each carry phosphothreonine. Positions 168 to 421 (KNEVFLDVIE…ITQNGDYQLR (254 aa)) constitute an MHD domain.

It belongs to the adaptor complexes medium subunit family. As to quaternary structure, adaptor protein complex 1 (AP-1) is a heterotetramer composed of two large adaptins (gamma-type subunit AP1G1 and beta-type subunit AP1B1), a medium adaptin (mu-type subunit AP1M1 or AP1M2) and a small adaptin (sigma-type subunit AP1S1 or AP1S2 or AP1S3). Interacts with MARCHF11. Phosphorylation of membrane-bound AP1M1/AP1M2 increases its affinity for sorting signals.

The protein resides in the golgi apparatus. The protein localises to the cytoplasmic vesicle. It is found in the clathrin-coated vesicle membrane. Its function is as follows. Subunit of clathrin-associated adaptor protein complex 1 that plays a role in protein sorting in the trans-Golgi network (TGN) and endosomes. The AP complexes mediate the recruitment of clathrin to membranes and the recognition of sorting signals within the cytosolic tails of transmembrane cargo molecules. The protein is AP-1 complex subunit mu-1 (Ap1m1) of Mus musculus (Mouse).